A 172-amino-acid chain; its full sequence is Oleosin 18 kDa (172 aa).

Ala-2 is modified (N-acetylalanine). The interval 2-38 is polar; the sequence is ADRDRAGQYYQQQRGQVGETVKGILPEKAPSASQALT. Residues 39–110 are hydrophobic; that stretch reads VATLFPLGGL…GGLSSLTFLA (72 aa). A run of 3 helical transmembrane segments spans residues 42–62, 70–90, and 91–111; these read LFPL…ASVV, VFLI…LAVA, and GFLT…FLAN. Positions 147–172 are disordered; it reads HAIQGRADQAGTGAGAGGGAGTKTSS. A compositionally biased stretch (gly residues) spans 158–172; it reads TGAGAGGGAGTKTSS.

Belongs to the oleosin family.

The protein resides in the lipid droplet. The protein localises to the membrane. Functionally, may have a structural role to stabilize the lipid body during desiccation of the seed by preventing coalescence of the oil. Probably interacts with both lipid and phospholipid moieties of lipid bodies. May also provide recognition signals for specific lipase anchorage in lipolysis during seedling growth. This is Oleosin 18 kDa (OLE18) from Oryza sativa subsp. indica (Rice).